Here is a 314-residue protein sequence, read N- to C-terminus: 3'-5' exoribonuclease YhaM (314 aa).

In terms of domain architecture, HD spans 163 to 279 (HVVSMLNLAK…LHYIDNLDAK (117 aa)).

It belongs to the YhaM family.

Its function is as follows. Shows a 3'-5' exoribonuclease activity. The sequence is that of 3'-5' exoribonuclease YhaM from Bacillus velezensis (strain DSM 23117 / BGSC 10A6 / LMG 26770 / FZB42) (Bacillus amyloliquefaciens subsp. plantarum).